Reading from the N-terminus, the 297-residue chain is Small ribosomal subunit biogenesis GTPase RsgA (297 aa).

The CP-type G domain maps to 65–223 (RNELVRPPVA…VADTPGFSAI (159 aa)). GTP is bound by residues 114-117 (TKVD) and 166-174 (GQSGAGKST). Positions 247, 252, 254, and 260 each coordinate Zn(2+).

It belongs to the TRAFAC class YlqF/YawG GTPase family. RsgA subfamily. Monomer. Associates with 30S ribosomal subunit, binds 16S rRNA. The cofactor is Zn(2+).

The protein localises to the cytoplasm. In terms of biological role, one of several proteins that assist in the late maturation steps of the functional core of the 30S ribosomal subunit. Helps release RbfA from mature subunits. May play a role in the assembly of ribosomal proteins into the subunit. Circularly permuted GTPase that catalyzes slow GTP hydrolysis, GTPase activity is stimulated by the 30S ribosomal subunit. The protein is Small ribosomal subunit biogenesis GTPase RsgA of Enterococcus faecalis (strain ATCC 700802 / V583).